The primary structure comprises 124 residues: Ribosome-binding factor A (124 aa).

The protein belongs to the RbfA family. As to quaternary structure, monomer. Binds 30S ribosomal subunits, but not 50S ribosomal subunits or 70S ribosomes.

The protein localises to the cytoplasm. Its function is as follows. One of several proteins that assist in the late maturation steps of the functional core of the 30S ribosomal subunit. Associates with free 30S ribosomal subunits (but not with 30S subunits that are part of 70S ribosomes or polysomes). Required for efficient processing of 16S rRNA. May interact with the 5'-terminal helix region of 16S rRNA. In Buchnera aphidicola subsp. Schizaphis graminum (strain Sg), this protein is Ribosome-binding factor A.